The following is a 59-amino-acid chain: Large ribosomal subunit protein bL32 (59 aa).

A disordered region spans residues 1–20; the sequence is MAVPRNRHSNARKNIRRSHH.

Belongs to the bacterial ribosomal protein bL32 family.

The polypeptide is Large ribosomal subunit protein bL32 (rpmF) (Chlamydia muridarum (strain MoPn / Nigg)).